A 1213-amino-acid polypeptide reads, in one-letter code: SWI/SNF complex subunit SMARCC2 (1213 aa).

Positions 1–274 are marR-like, BRCT and chromo domains module; sequence MAVRKKDGGP…PVSRRKKISA (274 aa). The MarR-like domain occupies 10 to 136; it reads PNVKYYEAAD…IEKSLVQNNC (127 aa). Positions 140–183 constitute a BRCT; N-terminus domain; sequence PNIFLCPEIEPKLLGKLKDIVKRHQGTISEDKSNASHVVYPVPG. The Chromo domain maps to 189 to 217; that stretch reads EWVRPVMKRDKQVLLHWGYYPDSYDTWIP. The region spanning 233 to 257 is the BRCT; C-terminus domain; that stretch reads KPRKVHAKWILDTDTFNEWMNEEDY. The tract at residues 256-413 is disordered; it reads DYEVSDDKSP…GEQTKNPDLH (158 aa). Positions 275–284 are enriched in polar residues; it reads KTLTDEVNSP. Phosphoserine is present on residues Ser283, Ser286, Ser302, Ser304, and Ser306. At Lys312 the chain carries N6-(ADP-ribosyl)lysine. Lys326 is subject to N6-acetyllysine. Positions 331-344 are enriched in basic and acidic residues; sequence HREEEQEDLTKDMD. Phosphoserine occurs at positions 347 and 387. Residues 379-398 are compositionally biased toward acidic residues; the sequence is DLDEQDDESMETTGKDEDEN. The SWIRM domain occupies 424–521; it reads IIIPSYAAWF…YQVDAESRPT (98 aa). Glycyl lysine isopeptide (Lys-Gly) (interchain with G-Cter in SUMO2) cross-links involve residues Lys564, Lys566, Lys568, and Lys592. One can recognise an SANT domain in the interval 596–647; sequence SATREWTEQETLLLLEALEMYKDDWNKVSEHVGSRTQDECILHFLRLPIEDP. Lys704 participates in a covalent cross-link: Glycyl lysine isopeptide (Lys-Gly) (interchain with G-Cter in SUMO2). Positions 724–848 are disordered; that stretch reads KVTGKADPAF…AEPEGERKTK (125 aa). Positions 747–777 are enriched in basic and acidic residues; sequence EPERIEESGTEEARPEGQAADEKKEPKEPRE. Residue Lys787 forms a Glycyl lysine isopeptide (Lys-Gly) (interchain with G-Cter in SUMO2) linkage. A compositionally biased stretch (basic and acidic residues) spans 788-848; that stretch reads EEISEVPKKD…AEPEGERKTK (61 aa). The residue at position 813 (Ser813) is a Phosphoserine. Residue Lys848 forms a Glycyl lysine isopeptide (Lys-Gly) (interchain with G-Cter in SUMO2) linkage. Residues 907–934 adopt a coiled-coil conformation; sequence EELETIMDREREALEYQRQQLLADRQAF. Disordered stretches follow at residues 947–1073 and 1181–1213; these read RQQH…HPGV and LPSASPLPDPGTPLPPDPTAPSPGTVTPVPPPQ. Low complexity predominate over residues 949-962; that stretch reads QHFQQMHQQQQQQP. A compositionally biased stretch (pro residues) spans 963-974; it reads PTLPPGSQPIPP. Over residues 975-1033 the composition is skewed to low complexity; the sequence is TGAAGPPTVHGLAVPPAAVASAPPGSGAPPGSLGPSEQIGQAGTTAGPQQPQQAGAPQP. Pro residues-rich tracts occupy residues 1034–1060 and 1185–1201; these read GAVPPGVPPPGPHGPSPFPNQPTPPSM and SPLPDPGTPLPPDPTAP.

This sequence belongs to the SMARCC family. As to quaternary structure, component of the multiprotein chromatin-remodeling complexes SWI/SNF: SWI/SNF-A (BAF), SWI/SNF-B (PBAF) and related complexes. The canonical complex contains a catalytic subunit (either SMARCA4/BRG1/BAF190A or SMARCA2/BRM/BAF190B) and at least SMARCE1, ACTL6A/BAF53, SMARCC1/BAF155, SMARCC2/BAF170, and SMARCB1/SNF5/BAF47. Other subunits specific to each of the complexes may also be present permitting several possible combinations developmentally and tissue specific. Component of the BAF complex, which includes at least actin (ACTB), ARID1A/BAF250A, ARID1B/BAF250B, SMARCA2/BRM, SMARCA4/BRG1, ACTL6A/BAF53, ACTL6B/BAF53B, SMARCE1/BAF57, SMARCC1/BAF155, SMARCC2/BAF170, SMARCB1/SNF5/INI1, and one or more SMARCD1/BAF60A, SMARCD2/BAF60B, or SMARCD3/BAF60C. In muscle cells, the BAF complex also contains DPF3. Component of neural progenitors-specific chromatin remodeling complex (npBAF complex) composed of at least, ARID1A/BAF250A or ARID1B/BAF250B, SMARCD1/BAF60A, SMARCD3/BAF60C, SMARCA2/BRM/BAF190B, SMARCA4/BRG1/BAF190A, SMARCB1/BAF47, SMARCC1/BAF155, SMARCE1/BAF57, SMARCC2/BAF170, PHF10/BAF45A, ACTL6A/BAF53A and actin. Component of neuron-specific chromatin remodeling complex (nBAF complex) composed of at least, ARID1A/BAF250A or ARID1B/BAF250B, SMARCD1/BAF60A, SMARCD3/BAF60C, SMARCA2/BRM/BAF190B, SMARCA4/BRG1/BAF190A, SMARCB1/BAF47, SMARCC1/BAF155, SMARCE1/BAF57, SMARCC2/BAF170, DPF1/BAF45B, DPF3/BAF45C, ACTL6B/BAF53B and actin. Component of the SWI/SNF-B (PBAF) chromatin remodeling complex, at least composed of SMARCA4/BRG1, SMARCB1/BAF47/SNF5, ACTL6A/BAF53A or ACTL6B/BAF53B, SMARCE1/BAF57, SMARCD1/BAF60A, SMARCD2/BAF60B, perhaps SMARCD3/BAF60C, SMARCC1/BAF155, SMARCC2/BAF170, PBRM1/BAF180, ARID2/BAF200 and actin. May also interact with the SIN3A histone deacetylase transcription repressor complex in conjunction with SMARCA2 and SMARCA4. Interacts with SMARD1. Interacts with KDM6B. Interaction with RCOR1. Interacts with DPF2. Interacts with ERCC6. Interacts with FOS. Mono-ADP-ribosylation at Lys-312 by SIRT6 promotes recruitment to the enhancer region of the Heme oxygenase-1 (HO-1) locus, leading to transcription activation of the locus.

It is found in the nucleus. Involved in transcriptional activation and repression of select genes by chromatin remodeling (alteration of DNA-nucleosome topology). Component of SWI/SNF chromatin remodeling complexes that carry out key enzymatic activities, changing chromatin structure by altering DNA-histone contacts within a nucleosome in an ATP-dependent manner. Can stimulate the ATPase activity of the catalytic subunit of these complexes. May be required for CoREST dependent repression of neuronal specific gene promoters in non-neuronal cells. Belongs to the neural progenitors-specific chromatin remodeling complex (npBAF complex) and the neuron-specific chromatin remodeling complex (nBAF complex). During neural development a switch from a stem/progenitor to a postmitotic chromatin remodeling mechanism occurs as neurons exit the cell cycle and become committed to their adult state. The transition from proliferating neural stem/progenitor cells to postmitotic neurons requires a switch in subunit composition of the npBAF and nBAF complexes. As neural progenitors exit mitosis and differentiate into neurons, npBAF complexes which contain ACTL6A/BAF53A and PHF10/BAF45A, are exchanged for homologous alternative ACTL6B/BAF53B and DPF1/BAF45B or DPF3/BAF45C subunits in neuron-specific complexes (nBAF). The npBAF complex is essential for the self-renewal/proliferative capacity of the multipotent neural stem cells. The nBAF complex along with CREST plays a role regulating the activity of genes essential for dendrite growth. Critical regulator of myeloid differentiation, controlling granulocytopoiesis and the expression of genes involved in neutrophil granule formation. The protein is SWI/SNF complex subunit SMARCC2 (Smarcc2) of Mus musculus (Mouse).